The primary structure comprises 1273 residues: Receptor-type tyrosine-protein phosphatase C (1273 aa).

Residues methionine 1–glycine 23 form the signal peptide. Over glutamine 24–lysine 546 the chain is Extracellular. The segment at leucine 45–proline 192 is disordered. Composition is skewed to polar residues over residues threonine 50 to leucine 77, glutamine 84 to alanine 111, and arginine 141 to proline 192. N-linked (GlcNAc...) asparagine glycosylation is present at asparagine 62. N-linked (GlcNAc...) asparagine glycans are attached at residues asparagine 142, asparagine 153, asparagine 164, asparagine 178, asparagine 200, asparagine 245, asparagine 250, asparagine 271, asparagine 282, asparagine 327, asparagine 333, asparagine 371, asparagine 374, asparagine 471, and asparagine 502. 2 Fibronectin type-III domains span residues proline 361–alanine 452 and arginine 453–serine 545. The chain crosses the membrane as a helical span at residues alanine 547 to leucine 567. Residues tyrosine 568–serine 1273 lie on the Cytoplasmic side of the membrane. Tyrosine-protein phosphatase domains follow at residues phenylalanine 622–tyrosine 881 and leucine 913–isoleucine 1196. The residue at position 652 (tyrosine 652) is a Phosphotyrosine. Residues aspartate 790, cysteine 822–arginine 828, and glutamine 866 contribute to the substrate site. Catalysis depends on cysteine 822, which acts as the Phosphocysteine intermediate. A phosphoserine mark is found at serine 944, serine 963, serine 966, serine 970, serine 973, serine 974, and serine 978. Residues leucine 960–serine 984 are disordered. Over residues alanine 968–glutamate 981 the composition is skewed to acidic residues. The active-site Phosphocysteine intermediate is cysteine 1137. 2 positions are modified to phosphoserine: serine 1209 and serine 1266. The segment at valine 1219–serine 1273 is disordered.

It belongs to the protein-tyrosine phosphatase family. Receptor class 1/6 subfamily. Interacts with SKAP1. Interacts with DPP4; the interaction is enhanced in an interleukin-12-dependent manner in activated lymphocytes. Binds GANAB and PRKCSH. Interacts with CD53; this interaction stabilizes PTPRC on the membrane and is required for optimal phosphatase activity. Interacts with CLEC10A. Post-translationally, heavily N- and O-glycosylated. The cytoplasmic domain contains potential phosphorylation sites. In terms of tissue distribution, isoform 1 and isoform 2 are found in thymocyte and lymph node. Isoform 4 and isoform 3 are found in the lymph nod.

Its subcellular location is the cell membrane. It localises to the membrane raft. It is found in the synapse. It carries out the reaction O-phospho-L-tyrosyl-[protein] + H2O = L-tyrosyl-[protein] + phosphate. Its function is as follows. Protein tyrosine-protein phosphatase required for T-cell activation through the antigen receptor. Acts as a positive regulator of T-cell coactivation upon binding to DPP4. The first PTPase domain has enzymatic activity, while the second one seems to affect the substrate specificity of the first one. Upon T-cell activation, recruits and dephosphorylates SKAP1 and FYN. Dephosphorylates LYN, and thereby modulates LYN activity. Interacts with CLEC10A at antigen presenting cell-T cell contact; CLEC10A on immature dendritic cells recognizes Tn antigen-carrying PTPRC/CD45 receptor on effector T cells and modulates T cell activation threshold to limit autoreactivity. In Rattus norvegicus (Rat), this protein is Receptor-type tyrosine-protein phosphatase C (Ptprc).